We begin with the raw amino-acid sequence, 247 residues long: MSENMAYECLKYSNENINRALEALRAGKMIQIYDSDSREGETDLVIPAKAVTYTDVKWMRKDAGGLICVAVDPVASKQLKLPFMADLVREASKTSDSLGEVVEKDGDLKYDAHSSFSLWVNHRDTRTGIPDIERALTIRKIGEITEESLSGNGVRFGNEFRTPGHVALLRAAEGLLDERMGQTELSVALARMAGITPAMVVCEMLDDDSGKALSKEKSKEYGKEHGLVFLEGREIVEAYLLWAGTDC.

Residues 38–39 (RE), Asp-43, 179–183 (RMGQT), and Glu-203 contribute to the D-ribulose 5-phosphate site. Glu-39 contacts Mg(2+).

It belongs to the DHBP synthase family. As to quaternary structure, homodimer. The cofactor is Mg(2+). Requires Mn(2+) as cofactor.

It carries out the reaction D-ribulose 5-phosphate = (2S)-2-hydroxy-3-oxobutyl phosphate + formate + H(+). It participates in cofactor biosynthesis; riboflavin biosynthesis; 2-hydroxy-3-oxobutyl phosphate from D-ribulose 5-phosphate: step 1/1. In terms of biological role, catalyzes the conversion of D-ribulose 5-phosphate to formate and 3,4-dihydroxy-2-butanone 4-phosphate. In Methanosarcina mazei (strain ATCC BAA-159 / DSM 3647 / Goe1 / Go1 / JCM 11833 / OCM 88) (Methanosarcina frisia), this protein is 3,4-dihydroxy-2-butanone 4-phosphate synthase.